Here is a 291-residue protein sequence, read N- to C-terminus: Ribosomal RNA small subunit methyltransferase H (291 aa).

Residues 36 to 38 (GGH), D55, A90, D102, and Q109 contribute to the S-adenosyl-L-methionine site.

The protein belongs to the methyltransferase superfamily. RsmH family.

It localises to the cytoplasm. The enzyme catalyses cytidine(1402) in 16S rRNA + S-adenosyl-L-methionine = N(4)-methylcytidine(1402) in 16S rRNA + S-adenosyl-L-homocysteine + H(+). Its function is as follows. Specifically methylates the N4 position of cytidine in position 1402 (C1402) of 16S rRNA. The polypeptide is Ribosomal RNA small subunit methyltransferase H (Thermosipho africanus (strain TCF52B)).